The sequence spans 309 residues: Polyprenal reductase (309 aa).

7 helical membrane-spanning segments follow: residues 12 to 32 (LPLY…FTLI), 72 to 92 (FYAI…SLIY), 114 to 134 (IPPI…LHVA), 151 to 171 (MNLF…ISIM), 184 to 204 (LHVS…LFWI), 242 to 262 (LVSC…FLVI), and 270 to 290 (FIIM…HSWY).

Belongs to the steroid 5-alpha reductase family. Polyprenal reductase subfamily.

It is found in the endoplasmic reticulum membrane. It carries out the reaction a di-trans,poly-cis-dolichal + NADP(+) = a di-trans,poly-cis-polyprenal + NADPH + H(+). It participates in protein modification; protein glycosylation. Its function is as follows. Plays a key role in early steps of protein N-linked glycosylation by being involved in the conversion of polyprenol into dolichol. Acts as a polyprenal reductase that mediates the reduction of polyprenal into dolichal in a NADP-dependent mechanism. Dolichols are required for the synthesis of dolichol-linked monosaccharides and the oligosaccharide precursor used for N-glycosylation. This is Polyprenal reductase from Caenorhabditis elegans.